A 345-amino-acid chain; its full sequence is Protein RecA (345 aa).

Position 80-87 (80-87 (GPESSGKT)) interacts with ATP.

Belongs to the RecA family.

The protein localises to the cytoplasm. Functionally, can catalyze the hydrolysis of ATP in the presence of single-stranded DNA, the ATP-dependent uptake of single-stranded DNA by duplex DNA, and the ATP-dependent hybridization of homologous single-stranded DNAs. It interacts with LexA causing its activation and leading to its autocatalytic cleavage. This chain is Protein RecA, found in Mycoplasma mycoides subsp. mycoides SC (strain CCUG 32753 / NCTC 10114 / PG1).